We begin with the raw amino-acid sequence, 486 residues long: Aspartyl/glutamyl-tRNA(Asn/Gln) amidotransferase subunit B (486 aa).

The protein belongs to the GatB/GatE family. GatB subfamily. As to quaternary structure, heterotrimer of A, B and C subunits.

The enzyme catalyses L-glutamyl-tRNA(Gln) + L-glutamine + ATP + H2O = L-glutaminyl-tRNA(Gln) + L-glutamate + ADP + phosphate + H(+). It carries out the reaction L-aspartyl-tRNA(Asn) + L-glutamine + ATP + H2O = L-asparaginyl-tRNA(Asn) + L-glutamate + ADP + phosphate + 2 H(+). Its function is as follows. Allows the formation of correctly charged Asn-tRNA(Asn) or Gln-tRNA(Gln) through the transamidation of misacylated Asp-tRNA(Asn) or Glu-tRNA(Gln) in organisms which lack either or both of asparaginyl-tRNA or glutaminyl-tRNA synthetases. The reaction takes place in the presence of glutamine and ATP through an activated phospho-Asp-tRNA(Asn) or phospho-Glu-tRNA(Gln). This is Aspartyl/glutamyl-tRNA(Asn/Gln) amidotransferase subunit B from Leptospira borgpetersenii serovar Hardjo-bovis (strain JB197).